We begin with the raw amino-acid sequence, 498 residues long: Glycerol kinase (498 aa).

T12 is an ADP binding site. Positions 12, 13, and 14 each coordinate ATP. Position 12 (T12) interacts with sn-glycerol 3-phosphate. R16 lines the ADP pocket. Residues R82, E83, Y134, and D241 each contribute to the sn-glycerol 3-phosphate site. Glycerol contacts are provided by R82, E83, Y134, D241, and Q242. T263 and G310 together coordinate ADP. 4 residues coordinate ATP: T263, G310, Q314, and G411. The ADP site is built by G411 and N415.

The protein belongs to the FGGY kinase family.

The enzyme catalyses glycerol + ATP = sn-glycerol 3-phosphate + ADP + H(+). It participates in polyol metabolism; glycerol degradation via glycerol kinase pathway; sn-glycerol 3-phosphate from glycerol: step 1/1. Inhibited by fructose 1,6-bisphosphate (FBP). Key enzyme in the regulation of glycerol uptake and metabolism. Catalyzes the phosphorylation of glycerol to yield sn-glycerol 3-phosphate. This Janthinobacterium sp. (strain Marseille) (Minibacterium massiliensis) protein is Glycerol kinase.